The following is a 362-amino-acid chain: Peptide chain release factor 1 (362 aa).

Position 232 is an N5-methylglutamine (Gln-232).

The protein belongs to the prokaryotic/mitochondrial release factor family. Methylated by PrmC. Methylation increases the termination efficiency of RF1.

It is found in the cytoplasm. Its function is as follows. Peptide chain release factor 1 directs the termination of translation in response to the peptide chain termination codons UAG and UAA. This chain is Peptide chain release factor 1, found in Myxococcus xanthus.